Here is a 114-residue protein sequence, read N- to C-terminus: Large ribosomal subunit protein bL19 (114 aa).

The protein belongs to the bacterial ribosomal protein bL19 family.

In terms of biological role, this protein is located at the 30S-50S ribosomal subunit interface and may play a role in the structure and function of the aminoacyl-tRNA binding site. This Thermoanaerobacter sp. (strain X514) protein is Large ribosomal subunit protein bL19.